The primary structure comprises 1363 residues: Spike glycoprotein (1363 aa).

Residues 1-13 (MFLILLISLPMAL) form the signal peptide. The Extracellular portion of the chain corresponds to 14 to 1307 (AVIGDLKCTT…GTYEYYVKWP (1294 aa)). The BetaCoV S1-NTD domain maps to 15–298 (VIGDLKCTTV…DFMSEIKCKT (284 aa)). Disulfide bonds link C21/C165, C160/C193, C172/C252, C286/C296, and C331/C356. 2 N-linked (GlcNAc...) asparagine; by host glycosylation sites follow: N59 and N133. An N-linked (GlcNAc...) asparagine; by host glycan is attached at N198. In terms of domain architecture, BetaCoV S1-CTD spans 329–617 (PDCNIEAWLN…DVNSGTTCST (289 aa)). Residue N359 is glycosylated (N-linked (GlcNAc...) asparagine; by host). Disulfide bonds link C374/C427 and C386/C615. N-linked (GlcNAc...) asparagine; by host glycans are attached at residues N437, N649, N676, N696, N714, N739, and N788. Fusion peptide regions lie at residues 914–935 (SAIE…VEAY) and 933–953 (EAYN…VQSY). The N-linked (GlcNAc...) asparagine; by host glycan is linked to N937. A disulfide bridge connects residues C938 and C949. The tract at residues 1014-1064 (QKLIANAFNNALDAIQEGFDATNSALVKIQAVVNANAEALNNLLQQLSNRF) is heptad repeat 1. A coiled-coil region spans residues 1043–1087 (QAVVNANAEALNNLLQQLSNRFGAISSSLQEILSRLDALEAQRQI). N1194, N1224, N1234, N1253, N1267, and N1288 each carry an N-linked (GlcNAc...) asparagine; by host glycan. A heptad repeat 2 region spans residues 1258-1296 (APDLSLDYINVTFLDLQDEMNRLQEAIKLLNQSYINLKD). A coiled-coil region spans residues 1269–1297 (TFLDLQDEMNRLQEAIKLLNQSYINLKDI). The helical transmembrane segment at 1308 to 1328 (WYVWLLIGFAGVAMLVLLFFI) threads the bilayer. Residues 1329–1363 (CCCTGCGTSCFKKCGGCCDDYTGHQELVIKTSHDD) lie on the Cytoplasmic side of the membrane. The KxHxx signature appears at 1359 to 1363 (TSHDD).

Belongs to the betacoronaviruses spike protein family. Homotrimer; each monomer consists of a S1 and a S2 subunit. The resulting peplomers protrude from the virus surface as spikes. Post-translationally, specific enzymatic cleavages in vivo yield mature proteins. The precursor is processed into S1 and S2 by host cell furin or another cellular protease to yield the mature S1 and S2 proteins. Additionally, a second cleavage leads to the release of a fusion peptide after viral attachment to host cell receptor. In terms of processing, the cytoplasmic Cys-rich domain is palmitoylated. Spike glycoprotein is digested within host endosomes.

It is found in the virion membrane. The protein localises to the host endoplasmic reticulum-Golgi intermediate compartment membrane. It localises to the host cell membrane. Its function is as follows. Attaches the virion to the cell membrane by interacting with host receptor, initiating the infection. Mediates fusion of the virion and cellular membranes by acting as a class I viral fusion protein. Under the current model, the protein has at least three conformational states: pre-fusion native state, pre-hairpin intermediate state, and post-fusion hairpin state. During viral and target cell membrane fusion, the coiled coil regions (heptad repeats) assume a trimer-of-hairpins structure, positioning the fusion peptide in close proximity to the C-terminal region of the ectodomain. The formation of this structure appears to drive apposition and subsequent fusion of viral and target cell membranes. Functionally, acts as a viral fusion peptide which is unmasked following S2 cleavage occurring upon virus endocytosis. The protein is Spike glycoprotein of Bos taurus (Bovine).